A 329-amino-acid chain; its full sequence is MADLLSVLQDKLSGKNVKIVLPEGEDERVLIAATQLQKTDYVSPIVLGNEDNIKSLASKHALDLTQIEIIDPATSELKDELVDAFVERRKGKATKEQAVELLDNVNYFGTMLVYTGKAEGLVSGAAHSTGDTVRPALQIIKTKPGVSRTSGIFFMIKGDEQYIFGDCAINPELDAQGLAEIAVESAKSAQSFGMNPKVAMLSFSTKGSAKSDDVTKVQEALKLAQEKAEADQLEHVVIDGEFQFDAAIVPSVAEKKAPGAKIQGDANVFVFPSLEAGNIGYKIAQRLGGYDAVGPVLQGLNSPVNDLSRGCSTEDVYNLSIITAAQALQ.

The protein belongs to the phosphate acetyltransferase and butyryltransferase family.

Its subcellular location is the cytoplasm. The enzyme catalyses acetyl-CoA + phosphate = acetyl phosphate + CoA. It participates in metabolic intermediate biosynthesis; acetyl-CoA biosynthesis; acetyl-CoA from acetate: step 2/2. The polypeptide is Phosphate acetyltransferase (pta) (Staphylococcus epidermidis (strain ATCC 35984 / DSM 28319 / BCRC 17069 / CCUG 31568 / BM 3577 / RP62A)).